The sequence spans 137 residues: uncharacterized protein (137 aa).

The segment at 1–26 (MKDKMWCEDTAQPHRRLPAPPSSSSP) is disordered.

This is an uncharacterized protein from Homo sapiens (Human).